We begin with the raw amino-acid sequence, 232 residues long: Octanoyltransferase (232 aa).

Residues glutamate 44–leucine 219 form the BPL/LPL catalytic domain. Substrate-binding positions include arginine 83–histidine 90, alanine 150–glycine 152, and glycine 163–serine 165. Cysteine 181 serves as the catalytic Acyl-thioester intermediate.

Belongs to the LipB family.

It is found in the cytoplasm. It carries out the reaction octanoyl-[ACP] + L-lysyl-[protein] = N(6)-octanoyl-L-lysyl-[protein] + holo-[ACP] + H(+). It functions in the pathway protein modification; protein lipoylation via endogenous pathway; protein N(6)-(lipoyl)lysine from octanoyl-[acyl-carrier-protein]: step 1/2. Catalyzes the transfer of endogenously produced octanoic acid from octanoyl-acyl-carrier-protein onto the lipoyl domains of lipoate-dependent enzymes. Lipoyl-ACP can also act as a substrate although octanoyl-ACP is likely to be the physiological substrate. This chain is Octanoyltransferase, found in Xanthomonas campestris pv. campestris (strain 8004).